The sequence spans 237 residues: Sugar fermentation stimulation protein homolog (237 aa).

The protein belongs to the SfsA family.

This is Sugar fermentation stimulation protein homolog from Actinobacillus pleuropneumoniae serotype 5b (strain L20).